Reading from the N-terminus, the 277-residue chain is Large ribosomal subunit protein uL2 (277 aa).

Disordered regions lie at residues 24 to 55 (ITTS…RHHG) and 221 to 277 (RGSV…RKKK).

This sequence belongs to the universal ribosomal protein uL2 family. In terms of assembly, part of the 50S ribosomal subunit. Forms a bridge to the 30S subunit in the 70S ribosome.

Its function is as follows. One of the primary rRNA binding proteins. Required for association of the 30S and 50S subunits to form the 70S ribosome, for tRNA binding and peptide bond formation. It has been suggested to have peptidyltransferase activity; this is somewhat controversial. Makes several contacts with the 16S rRNA in the 70S ribosome. The chain is Large ribosomal subunit protein uL2 from Listeria welshimeri serovar 6b (strain ATCC 35897 / DSM 20650 / CCUG 15529 / CIP 8149 / NCTC 11857 / SLCC 5334 / V8).